The sequence spans 99 residues: MANNNSAKKRIQIAERNRIQNRTYKSAMRTLMKRCFEACGAYSEKPSEDAKKDIQNSMNDAFSKIDKAVKTGVLHRNTGANQKSRLTSVVKKTIEPVVK.

The protein belongs to the bacterial ribosomal protein bS20 family.

Its function is as follows. Binds directly to 16S ribosomal RNA. This is Small ribosomal subunit protein bS20 from Prochlorococcus marinus (strain SARG / CCMP1375 / SS120).